The sequence spans 488 residues: Glycogen synthase (488 aa).

Arg20 lines the ADP-alpha-D-glucose pocket.

Belongs to the glycosyltransferase 1 family. Bacterial/plant glycogen synthase subfamily.

The catalysed reaction is [(1-&gt;4)-alpha-D-glucosyl](n) + ADP-alpha-D-glucose = [(1-&gt;4)-alpha-D-glucosyl](n+1) + ADP + H(+). Its pathway is glycan biosynthesis; glycogen biosynthesis. Its function is as follows. Synthesizes alpha-1,4-glucan chains using ADP-glucose. In Chlorobaculum tepidum (strain ATCC 49652 / DSM 12025 / NBRC 103806 / TLS) (Chlorobium tepidum), this protein is Glycogen synthase.